Here is a 118-residue protein sequence, read N- to C-terminus: Putative pterin-4-alpha-carbinolamine dehydratase (118 aa).

It belongs to the pterin-4-alpha-carbinolamine dehydratase family.

It carries out the reaction (4aS,6R)-4a-hydroxy-L-erythro-5,6,7,8-tetrahydrobiopterin = (6R)-L-erythro-6,7-dihydrobiopterin + H2O. In Xanthomonas euvesicatoria pv. vesicatoria (strain 85-10) (Xanthomonas campestris pv. vesicatoria), this protein is Putative pterin-4-alpha-carbinolamine dehydratase.